Here is a 311-residue protein sequence, read N- to C-terminus: Malate dehydrogenase (311 aa).

NAD(+) contacts are provided by residues 7–13 and Asp34; that span reads GAAGGIG. Substrate is bound by residues Arg81 and Arg87. NAD(+) contacts are provided by residues Asn94 and 117–119; that span reads ITN. The substrate site is built by Asn119 and Arg153. His177 (proton acceptor) is an active-site residue. Met227 contributes to the NAD(+) binding site.

This sequence belongs to the LDH/MDH superfamily. MDH type 1 family. As to quaternary structure, homodimer.

The catalysed reaction is (S)-malate + NAD(+) = oxaloacetate + NADH + H(+). Functionally, catalyzes the reversible oxidation of malate to oxaloacetate. This chain is Malate dehydrogenase, found in Shewanella putrefaciens (strain CN-32 / ATCC BAA-453).